The sequence spans 226 residues: DNA mismatch repair protein MutH (226 aa).

It belongs to the MutH family.

The protein resides in the cytoplasm. Sequence-specific endonuclease that cleaves unmethylated GATC sequences. It is involved in DNA mismatch repair. The protein is DNA mismatch repair protein MutH of Actinobacillus pleuropneumoniae serotype 3 (strain JL03).